The following is a 57-amino-acid chain: Large ribosomal subunit protein bL32 (57 aa).

The protein belongs to the bacterial ribosomal protein bL32 family.

The protein is Large ribosomal subunit protein bL32 of Geobacillus kaustophilus (strain HTA426).